The chain runs to 38 residues: Photosystem I reaction center subunit IX (38 aa).

A helical transmembrane segment spans residues 4 to 24 (FLTTAPVFSAIWFTLTAGIMI).

The protein belongs to the PsaJ family.

Its subcellular location is the plastid. It localises to the organellar chromatophore thylakoid membrane. May help in the organization of the PsaE and PsaF subunits. The protein is Photosystem I reaction center subunit IX of Paulinella chromatophora.